The chain runs to 419 residues: UDP-N-acetylglucosamine 1-carboxyvinyltransferase (419 aa).

22 to 23 (KN) is a binding site for phosphoenolpyruvate. R91 contributes to the UDP-N-acetyl-alpha-D-glucosamine binding site. Residue C115 is the Proton donor of the active site. A 2-(S-cysteinyl)pyruvic acid O-phosphothioketal modification is found at C115. UDP-N-acetyl-alpha-D-glucosamine contacts are provided by residues 120-124 (RPVDL), 160-163 (KVSV), D305, and V327.

The protein belongs to the EPSP synthase family. MurA subfamily.

The protein resides in the cytoplasm. It carries out the reaction phosphoenolpyruvate + UDP-N-acetyl-alpha-D-glucosamine = UDP-N-acetyl-3-O-(1-carboxyvinyl)-alpha-D-glucosamine + phosphate. Its pathway is cell wall biogenesis; peptidoglycan biosynthesis. Its function is as follows. Cell wall formation. Adds enolpyruvyl to UDP-N-acetylglucosamine. This Shigella sonnei (strain Ss046) protein is UDP-N-acetylglucosamine 1-carboxyvinyltransferase.